Here is a 452-residue protein sequence, read N- to C-terminus: Chromosomal replication initiator protein DnaA (452 aa).

The domain I, interacts with DnaA modulators stretch occupies residues Met1–Ala85. Residues Ala85–Ser115 form a domain II region. A domain III, AAA+ region region spans residues His116–Ala332. 4 residues coordinate ATP: Gly160, Gly162, Lys163, and Thr164. Positions His333 to Ser452 are domain IV, binds dsDNA.

This sequence belongs to the DnaA family. Oligomerizes as a right-handed, spiral filament on DNA at oriC.

The protein localises to the cytoplasm. In terms of biological role, plays an essential role in the initiation and regulation of chromosomal replication. ATP-DnaA binds to the origin of replication (oriC) to initiate formation of the DNA replication initiation complex once per cell cycle. Binds the DnaA box (a 9 base pair repeat at the origin) and separates the double-stranded (ds)DNA. Forms a right-handed helical filament on oriC DNA; dsDNA binds to the exterior of the filament while single-stranded (ss)DNA is stabiized in the filament's interior. The ATP-DnaA-oriC complex binds and stabilizes one strand of the AT-rich DNA unwinding element (DUE), permitting loading of DNA polymerase. After initiation quickly degrades to an ADP-DnaA complex that is not apt for DNA replication. Binds acidic phospholipids. This chain is Chromosomal replication initiator protein DnaA, found in Legionella pneumophila (strain Paris).